The following is a 75-amino-acid chain: uncharacterized protein (75 aa).

A signal peptide spans M1–A18.

This is an uncharacterized protein from Treponema pallidum (strain Nichols).